Consider the following 196-residue polypeptide: Hibernation-associated plasma protein HP-20 (196 aa).

The signal sequence occupies residues 1-23; it reads MTDVWRLAIFVLMVNVLNDQVSC. The 39-residue stretch at 25–63 folds into the Collagen-like domain; that stretch reads GPPGPVGYPGVPGVPGPRGPPGQPGAAGRPGDPGPKGPS. The segment covering 28-47 has biased composition (pro residues); sequence GPVGYPGVPGVPGPRGPPGQ. Positions 28-64 are disordered; sequence GPVGYPGVPGVPGPRGPPGQPGAAGRPGDPGPKGPSV. Residues 67-196 enclose the C1q domain; the sequence is PCRERSAFTV…IYFSGFLISS (130 aa).

As to expression, plasma; synthesized in the liver.

It is found in the secreted. Plasma proteins HP-20, HP-25, HP-27 and HP-55 form a 140 kDa complex via disulfide bonds in the plasma and are hibernation specific. This Tamias sibiricus (Siberian chipmunk) protein is Hibernation-associated plasma protein HP-20.